The sequence spans 400 residues: MSDNITPKTGKTNAIIEWIDYRLPVFSFLKHFSHYQTPKNLSYLWNLGSIAGIALVIQIITGVILAMHYTPHVDHAFDSVEKIMRNVNYGWLLRYTHAVGASMFFAAVYLHIARGLYYGSYKAPRELLWHIGIIIFLTMMATAFMGYVLPWGQMSYWGATVITNLFSAIPLIGKSIVTWLWGGFSVDNPTLNRFFSLHYLLPFIIVALVMLHLVALHQHGSNNPKGIDVKSPKDTIPFHPYYTVKDFVGFGVYFIIFAYFIFYEPNYLGHPDNYIPANPLVTPAHIVPEWYFLPFYAILRAVPSKLGGVLLMFGSIFVLFLLPWLDTSKVRSANYRPIYRIAFWIFMADCLLLGYLGGQPAEEPYITISRFAACYYFFHFLVALPLIGKYEKPLPLPEEL.

The helical transmembrane segment at 47-67 (LGSIAGIALVIQIITGVILAM) threads the bilayer. Residues His97 and His111 each contribute to the heme b site. The next 8 helical transmembrane spans lie at 98 to 118 (AVGA…GLYY), 131 to 151 (IGII…VLPW), 166 to 186 (FSAI…GFSV), 194 to 214 (FFSL…LHLV), 247 to 267 (FVGF…EPNY), 306 to 326 (LGGV…PWLD), 341 to 361 (IAFW…GQPA), and 368 to 388 (ISRF…PLIG). His198 and His212 together coordinate heme b.

This sequence belongs to the cytochrome b family. In terms of assembly, the main subunits of complex b-c1 are: cytochrome b, cytochrome c1 and the Rieske protein. Heme b is required as a cofactor.

Its subcellular location is the cell membrane. Its function is as follows. Component of the ubiquinol-cytochrome c reductase complex (complex III or cytochrome b-c1 complex), which is a respiratory chain that generates an electrochemical potential coupled to ATP synthesis. This chain is Cytochrome b (petB), found in Rickettsia bellii (strain RML369-C).